Reading from the N-terminus, the 70-residue chain is Acyl carrier protein (70 aa).

Residues 2–70 (SDIADRVKKI…ETIQTFGDAP (69 aa)) form the Carrier domain. S37 is subject to O-(pantetheine 4'-phosphoryl)serine.

The protein belongs to the acyl carrier protein (ACP) family. In terms of processing, 4'-phosphopantetheine is transferred from CoA to a specific serine of apo-ACP by AcpS. This modification is essential for activity because fatty acids are bound in thioester linkage to the sulfhydryl of the prosthetic group.

The protein resides in the cytoplasm. Its pathway is lipid metabolism; fatty acid biosynthesis. Carrier of the growing fatty acid chain in fatty acid biosynthesis. This Cereibacter sphaeroides (Rhodobacter sphaeroides) protein is Acyl carrier protein.